Here is a 710-residue protein sequence, read N- to C-terminus: Dynein axonemal assembly factor 3 homolog (710 aa).

Residues 403–487 (GAEAGAGAGP…DSDPAAAAST (85 aa)) are disordered. Over residues 404–416 (AEAGAGAGPGGEA) the composition is skewed to gly residues. The segment covering 417–438 (AAGASSSSGKEEAAAAAAAGKE) has biased composition (low complexity). Over residues 453–462 (SGSGAPGAGT) the composition is skewed to gly residues. A compositionally biased stretch (low complexity) spans 478 to 487 (DSDPAAAAST).

It belongs to the DNAAF3 family.

The protein localises to the cytoplasm. In terms of biological role, required for the assembly of axonemal inner and outer dynein arms. Involved in preassembly of dyneins into complexes before their transport into cilia. This chain is Dynein axonemal assembly factor 3 homolog (DAB1), found in Chlamydomonas reinhardtii (Chlamydomonas smithii).